We begin with the raw amino-acid sequence, 651 residues long: Forkhead box protein K2 (651 aa).

Over residues 1–13 (MAAAAALSGAGAP) the composition is skewed to low complexity. The segment at 1–29 (MAAAAALSGAGAPPAGGGAGGGGSPPGGW) is disordered. Residues 14 to 26 (PAGGGAGGGGSPP) are compositionally biased toward gly residues. The residue at position 24 (Ser-24) is a Phosphoserine. Positions 48 to 119 (VTIGRNSSQG…NGVFVDGVFQ (72 aa)) constitute an FHA domain. The interval 120 to 162 (RRGAPPLQLPRVCTFRFPSTNIKITFTALSSEKREKQEAPESP) is required for interaction with DVL2 and SUDS3. Arg-135 carries the omega-N-methylarginine modification. Disordered regions lie at residues 150-171 (SEKREKQEAPESPVKPVQPHIS) and 194-251 (TISA…SKPP). Residues Lys-152 and Lys-155 each participate in a glycyl lysine isopeptide (Lys-Gly) (interchain with G-Cter in SUMO2) cross-link. Over residues 194-203 (TISAANSCPS) the composition is skewed to polar residues. Ser-230 bears the Phosphoserine mark. Basic and acidic residues predominate over residues 233–249 (ENEKEASGGDSPKDDSK). The fork-head DNA-binding region spans 249–344 (KPPYSYAQLI…EQAFRKRRPR (96 aa)). The segment at 291–309 (KGWQNSIRHNLSLNRYFIK) is DNA-binding; major groove. Mg(2+) is bound by residues Leu-301, Ser-302, Asn-304, and Phe-307. DNA-binding; minor groove stretches follow at residues 319-323 (KGSFW) and 339-344 (RKRRPR). Residues 350-399 (RTPLGPLSSRSAPASPNHAGVLSAHSSGAQTPESLSREGSPAPLEPEPGA) are disordered. Ser-364 bears the Phosphoserine mark. Polar residues predominate over residues 373-383 (AHSSGAQTPES). A phosphoserine mark is found at Ser-389, Ser-415, and Ser-419. A Glycyl lysine isopeptide (Lys-Gly) (interchain with G-Cter in SUMO2) cross-link involves residue Lys-518. Ser-590 is modified (phosphoserine). Over residues 601-614 (ASASLPTKRQNGDQ) the composition is skewed to polar residues. The tract at residues 601-623 (ASASLPTKRQNGDQAEQPELKRV) is disordered. Residue Lys-624 forms a Glycyl lysine isopeptide (Lys-Gly) (interchain with G-Cter in SUMO2) linkage.

Component of SIN3A-, but not SIN3B-, containing multiprotein complexes. Interacts with DVL1, DVL2 (when phosphorylated) and DVL3; the interaction induces DVL2 nuclear translocation. Interacts with SUDS3. Interacts with BAP1 (when phosphorylated); leading to recruit the PR-DUB complex and repress FOXK2 target genes. Accessory component of the polycomb repressive deubiquitinase (PR-DUB) complex, at least composed of BAP1, one of ASXL1, ASXL2 or (probably) ASXL3 and one of MBD5 or MBD6. The PR-DUB core associates with a number of accessory proteins, including FOXK1, FOXK2, KDM1B, HCFC1 and OGT. In terms of processing, hyperphosphorylated during mitosis by CDK1 and, to a lower extent, CDK2. Phosphorylation at Ser-364 and Ser-419 affects stability by promoting degradation. In terms of tissue distribution, expressed in a wide range of adult brain regions, namely the piriform cortex, the major islands of Calleja and cells lining the lateral ventricles, the bed nucleus of stria terminalis, the paraventricular thalamic nucleus, habenula and all structures of the hippocampus. Also present in the hypothalamus, cerebral cortex and in the Purkinje cell layer in the cerebellum. Additionally expressed in dopamine neurons of the substantia and more sparsely in the ventral tegmental area.

It localises to the nucleus. It is found in the cytoplasm. Its function is as follows. Transcriptional regulator involved in different processes such as glucose metabolism, aerobic glycolysis and autophagy. Recognizes and binds the forkhead DNA sequence motif (5'-GTAAACA-3') and can both act as a transcription activator or repressor, depending on the context. Together with FOXK1, acts as a key regulator of metabolic reprogramming towards aerobic glycolysis, a process in which glucose is converted to lactate in the presence of oxygen. Acts by promoting expression of enzymes for glycolysis (such as hexokinase-2 (HK2), phosphofructokinase, pyruvate kinase (PKLR) and lactate dehydrogenase), while suppressing further oxidation of pyruvate in the mitochondria by up-regulating pyruvate dehydrogenase kinases PDK1 and PDK4. Probably plays a role in gluconeogenesis during overnight fasting, when lactate from white adipose tissue and muscle is the main substrate. Together with FOXK1, acts as a negative regulator of autophagy in skeletal muscle: in response to starvation, enters the nucleus, binds the promoters of autophagy genes and represses their expression, preventing proteolysis of skeletal muscle proteins. In addition to the 5'-GTAAACA-3' DNA motif, also binds the 5'-TGANTCA-3' palindromic DNA motif, and co-associates with JUN/AP-1 to activate transcription. Also able to bind to a minimal DNA heteroduplex containing a G/T-mismatch with 5'-TRT[G/T]NB-3' sequence. Binds to NFAT-like motifs (purine-rich) in the IL2 promoter. Positively regulates WNT/beta-catenin signaling by translocating DVL proteins into the nucleus. Accessory component of the polycomb repressive deubiquitinase (PR-DUB) complex; recruits the PR-DUB complex to specific FOXK2-bound genes. In Mus musculus (Mouse), this protein is Forkhead box protein K2.